Here is a 530-residue protein sequence, read N- to C-terminus: Seeligeriolysin (530 aa).

The signal sequence occupies residues 1–25 (MKIFGLVIMSLLFVSLPITQQPEAR). Positions 36-55 (TISPAETPESPPATPKTPVE) are disordered. The next 4 membrane-spanning stretches (beta stranded) occupy residues 215–228 (ESQL…AFKA), 235–244 (VNFEAISDGK), 313–322 (SNKVKTAFEA), and 330–342 (KGDV…IKNS). The short motif at 484-494 (ECTGLFWEWWR) is the Conserved undecapeptide element. A Cholesterol binding motif is present at residues 516–517 (TL).

This sequence belongs to the cholesterol-dependent cytolysin family. Homooligomeric pore complex of 35 to 50 subunits; when inserted in the host membrane.

Its subcellular location is the secreted. The protein resides in the host cell membrane. A cholesterol-dependent toxin that causes cytolysis by forming pores in cholesterol containing host membranes. L.seeligeri is non-pathogenic, perhaps in part because this protein is about 25% as toxic as listeriolysin O. Mutating a single residue in the undecapeptide increases toxicity 2-fold. After binding to target membranes, the protein undergoes a major conformation change, leading to its insertion in the host membrane and formation of an oligomeric pore complex. Cholesterol is required for binding to host membranes, membrane insertion and pore formation; cholesterol binding is mediated by a Thr-Leu pair in the C-terminus. Can be reversibly inactivated by oxidation. The protein is Seeligeriolysin of Listeria seeligeri.